We begin with the raw amino-acid sequence, 106 residues long: ATP-dependent Clp protease adapter protein ClpS (106 aa).

Belongs to the ClpS family. Binds to the N-terminal domain of the chaperone ClpA.

Its function is as follows. Involved in the modulation of the specificity of the ClpAP-mediated ATP-dependent protein degradation. This chain is ATP-dependent Clp protease adapter protein ClpS, found in Escherichia fergusonii (strain ATCC 35469 / DSM 13698 / CCUG 18766 / IAM 14443 / JCM 21226 / LMG 7866 / NBRC 102419 / NCTC 12128 / CDC 0568-73).